The following is a 467-amino-acid chain: Cytochrome c-552 (467 aa).

The signal sequence occupies residues 1–27 (MMKKMTGKSFALSALVAASFMAAGAMA). His-87 provides a ligand contact to heme c. Residues Cys-115, Cys-118, and Lys-119 each contribute to the heme site. Heme c-binding residues include Cys-153, Cys-156, His-157, Cys-195, Cys-198, and His-199. Ca(2+) contacts are provided by Glu-201, Tyr-202, Lys-250, and Gln-252. Substrate is bound at residue Tyr-202. Position 253 (His-253) interacts with substrate. Heme c contacts are provided by His-264, Cys-271, Cys-274, His-275, His-290, Cys-303, Cys-306, His-307, and His-382.

This sequence belongs to the cytochrome c-552 family. Ca(2+) is required as a cofactor. The cofactor is heme c.

It localises to the periplasm. It carries out the reaction 6 Fe(III)-[cytochrome c] + NH4(+) + 2 H2O = 6 Fe(II)-[cytochrome c] + nitrite + 8 H(+). The protein operates within nitrogen metabolism; nitrate reduction (assimilation). Functionally, catalyzes the reduction of nitrite to ammonia, consuming six electrons in the process. The sequence is that of Cytochrome c-552 from Shewanella sp. (strain MR-4).